We begin with the raw amino-acid sequence, 265 residues long: HUWE1-associated protein modifying stress responses (265 aa).

Disordered stretches follow at residues 1–22 (MEDKKEEGESEIQEHGPEHWFS), 145–170 (RNSRAPPRLTVVSPNRATPTETGSSV), 195–218 (VRSSTPGSPTHVSGSSNTGRRRNG), and 240–265 (GTRKRSSAQCGDVITDSPTHKRNRMI). Polar residues-rich tracts occupy residues 156–170 (VSPNRATPTETGSSV) and 195–212 (VRSSTPGSPTHVSGSSNT).

The protein belongs to the TAPR1 family. Oligomer.

The protein resides in the nucleus. The protein localises to the cytoplasm. Acts as a central player within a network of stress response pathways promoting cellular adaptability. Functions as a negative regulator of TP53/P53 in the cellular response to telomere erosion and probably also DNA damage. The protein is HUWE1-associated protein modifying stress responses of Xenopus laevis (African clawed frog).